We begin with the raw amino-acid sequence, 1320 residues long: Sal-like protein 3 (1320 aa).

The segment covering 1 to 11 (MSRRKQAKPQH) has biased composition (basic residues). A disordered region spans residues 1–49 (MSRRKQAKPQHLKSDEELPPQDGASEHGVPGDGAEDADSGSESRSGSEE). A compositionally biased stretch (low complexity) spans 40–49 (GSESRSGSEE). The segment at 51 to 73 (SVCEKCCAEFFKWADFLQHKKTC) adopts a C2H2-type 1; atypical zinc-finger fold. Disordered stretches follow at residues 84-166 (DDEP…AFSM) and 271-367 (LSAG…NLPN). The span at 88–100 (APPSEDFPEPSPA) shows a compositional bias: pro residues. Position 109 is a phosphoserine (Ser-109). A compositionally biased stretch (basic and acidic residues) spans 121 to 131 (SEVKAATKEAE). A compositionally biased stretch (pro residues) spans 143 to 160 (PPGPSVPPPPPALPPQPE). Positions 271–289 (LSAGPATASAGSGSTLPAA) are enriched in low complexity. Polar residues predominate over residues 295 to 311 (HLSQPASGTSTPCSTSA). Low complexity-rich tracts occupy residues 323 to 342 (STGP…GNAV) and 355 to 367 (PGPL…NLPN). 2 C2H2-type zinc fingers span residues 427–449 (HKCR…LRSH) and 455–477 (FKCN…FQRH). The tract at residues 534 to 623 (GLQLPPTVPG…RTGDAPVVGG (90 aa)) is disordered. Residues 543 to 554 (GTHNYTDSPSIT) are compositionally biased toward polar residues. The segment covering 555–568 (PVSRSPQRPSPASS) has biased composition (low complexity). Residues 569–583 (ECTSLSPGLNNTESG) are compositionally biased toward polar residues. C2H2-type zinc fingers lie at residues 692 to 714 (NQCV…YRTH), 720 to 742 (FKCK…FGVH), and 752 to 774 (HSCP…IRMH). 2 disordered regions span residues 807–846 (SSFD…PPSP) and 878–972 (VENG…GHPG). Over residues 809 to 823 (FDDDIDENSMEEDSE) the composition is skewed to acidic residues. Composition is skewed to low complexity over residues 834 to 846 (PLLS…PPSP) and 902 to 923 (RSAG…PAHS). Ser-932 is modified (phosphoserine). 4 C2H2-type zinc fingers span residues 997–1019 (TVCG…YRSH), 1025–1047 (FVCT…LLTH), 1133–1155 (HNCQ…ERTH), and 1161–1183 (FGCT…MGTH). Phosphoserine is present on Ser-1197.

This sequence belongs to the sal C2H2-type zinc-finger protein family. In terms of tissue distribution, in adult brain, testis and kidney. In lower levels also in adult ovaries and embryonic stem cells. In embryo in developing neuroectoderm of brain, inner ear and spinal cord. Also weakly and transiently expressed in embryonic branchial arches, notochord, limb buds and heart.

It localises to the nucleus. Functionally, probable transcription factor. The chain is Sal-like protein 3 (Sall3) from Mus musculus (Mouse).